A 299-amino-acid chain; its full sequence is Tyrosine recombinase XerC (299 aa).

Residues 1 to 85 (MERQLEAYCA…AVRGLYRYLN (85 aa)) enclose the Core-binding (CB) domain. Residues 106–285 (RLPKTLDTDR…DFQHLAAVYD (180 aa)) enclose the Tyr recombinase domain. Active-site residues include arginine 146, lysine 170, histidine 237, arginine 240, and histidine 263. Tyrosine 272 serves as the catalytic O-(3'-phospho-DNA)-tyrosine intermediate.

This sequence belongs to the 'phage' integrase family. XerC subfamily. Forms a cyclic heterotetrameric complex composed of two molecules of XerC and two molecules of XerD.

It localises to the cytoplasm. Site-specific tyrosine recombinase, which acts by catalyzing the cutting and rejoining of the recombining DNA molecules. The XerC-XerD complex is essential to convert dimers of the bacterial chromosome into monomers to permit their segregation at cell division. It also contributes to the segregational stability of plasmids. The chain is Tyrosine recombinase XerC from Pseudomonas entomophila (strain L48).